The chain runs to 119 residues: Large ribosomal subunit protein bL19 (119 aa).

It belongs to the bacterial ribosomal protein bL19 family.

This protein is located at the 30S-50S ribosomal subunit interface and may play a role in the structure and function of the aminoacyl-tRNA binding site. The protein is Large ribosomal subunit protein bL19 of Pediococcus pentosaceus (strain ATCC 25745 / CCUG 21536 / LMG 10740 / 183-1w).